A 446-amino-acid polypeptide reads, in one-letter code: C4-dicarboxylate transport protein (446 aa).

Helical transmembrane passes span 25–45, 58–78, 93–113, 159–179, 199–219, 236–256, 322–342, 370–390, and 400–420; these read VQVL…PAIG, LVKM…IASI, FAYF…VANV, ALTE…GLAL, VFFG…FGAM, LLIA…LGAV, IYMT…LSLG, AATL…ILGI, and LTNF…EKGL.

The protein belongs to the dicarboxylate/amino acid:cation symporter (DAACS) (TC 2.A.23) family.

It localises to the cell inner membrane. Functionally, responsible for the transport of dicarboxylates such as succinate, fumarate, and malate from the periplasm across the membrane. The protein is C4-dicarboxylate transport protein of Sphingopyxis alaskensis (strain DSM 13593 / LMG 18877 / RB2256) (Sphingomonas alaskensis).